The primary structure comprises 128 residues: Large ribosomal subunit protein bL17 (128 aa).

The protein belongs to the bacterial ribosomal protein bL17 family. Part of the 50S ribosomal subunit. Contacts protein L32.

The sequence is that of Large ribosomal subunit protein bL17 from Pseudomonas syringae pv. syringae (strain B728a).